Consider the following 366-residue polypeptide: Histidinol-phosphate aminotransferase 1 (366 aa).

Lys226 bears the N6-(pyridoxal phosphate)lysine mark.

The protein belongs to the class-II pyridoxal-phosphate-dependent aminotransferase family. Histidinol-phosphate aminotransferase subfamily. In terms of assembly, homodimer. The cofactor is pyridoxal 5'-phosphate.

It carries out the reaction L-histidinol phosphate + 2-oxoglutarate = 3-(imidazol-4-yl)-2-oxopropyl phosphate + L-glutamate. The protein operates within amino-acid biosynthesis; L-histidine biosynthesis; L-histidine from 5-phospho-alpha-D-ribose 1-diphosphate: step 7/9. This chain is Histidinol-phosphate aminotransferase 1, found in Mannheimia succiniciproducens (strain KCTC 0769BP / MBEL55E).